Consider the following 287-residue polypeptide: Protease HtpX (287 aa).

A run of 2 helical transmembrane segments spans residues 4–24 and 36–56; these read VMLFLATNLAVVLVLSVVLNI and LSGLLVMAAVFGFGGSFISLM. A Zn(2+)-binding site is contributed by H143. Residue E144 is part of the active site. H147 lines the Zn(2+) pocket. A run of 2 helical transmembrane segments spans residues 158 to 178 and 192 to 212; these read LMQGVVNTFVIFLSRFIANIV and MVYFGVSMVLELVFGFLASFI. E221 is a binding site for Zn(2+).

Belongs to the peptidase M48B family. Requires Zn(2+) as cofactor.

It is found in the cell inner membrane. The chain is Protease HtpX from Vibrio atlanticus (strain LGP32) (Vibrio splendidus (strain Mel32)).